Consider the following 1500-residue polypeptide: Host cell factor (1500 aa).

Kelch repeat units lie at residues 85–133, 135–181, 189–237, 259–307, and 308–373; these read LMVV…VEGT, MFVF…RLGH, KIFL…TYGD, NLLI…MIGN, and KMYV…GIQS. Ser477 carries the post-translational modification Phosphoserine. The segment covering 517–528 has biased composition (polar residues); sequence LLQSMSQPSSPA. A disordered region spans residues 517 to 543; sequence LLQSMSQPSSPASRADKDPLSSGGGTT. 2 positions are modified to phosphoserine: Ser958 and Ser966. The tract at residues 1024-1061 is disordered; the sequence is SEGQHGSEENENNGENATSSSASALFTGGDTAGPSRAQ. Positions 1036 to 1047 are enriched in low complexity; the sequence is NGENATSSSASA. Thr1126 bears the Phosphothreonine mark. The interval 1161–1185 is disordered; sequence IGSLKENQDENKKFKQRQESSPSQN. Residues 1166 to 1178 show a composition bias toward basic and acidic residues; sequence ENQDENKKFKQRQ. Fibronectin type-III domains are found at residues 1244–1341 and 1346–1457; these read VQST…TCLP and APSA…DPAA. Residues 1458–1500 form a disordered region; that stretch reads AKQHTPTVTPNLKRGPEKSTIGSSNIANTFCSPHKRGRNGLHD. A Bipartite nuclear localization signal motif is present at residues 1470–1495; that stretch reads KRGPEKSTIGSSNIANTFCSPHKRGR. Over residues 1477–1488 the composition is skewed to polar residues; sequence TIGSSNIANTFC. The residue at position 1489 (Ser1489) is a Phosphoserine. Basic residues predominate over residues 1490–1500; that stretch reads PHKRGRNGLHD.

Core component of several methyltransferase-containing complexes. Component of the SET1 complex, composed at least of the catalytic subunit Set1, wds/WDR5, Wdr82, Rbbp5, ash2, Cfp1/CXXC1, hcf and Dpy-30L1. Component of the MLL3/4 complex composed at least of the catalytic subunit trr, ash2, Rbbp5, Dpy-30L1, wds, hcf, ptip, Pa1, Utx, Lpt and Ncoa6. Component of the Ada2a-containing (ATAC) complex composed of at least Ada2a, Atac1, Hcf, Ada3, Gcn5, Mocs2B, Charac-14, Atac3, Atac2, NC2beta and wds. Proteolytic cleavage occurs between amino acids 900 and 1100 within the non-conserved central region, giving rise to two independent but tightly associated N- and C-terminal subunits.

It is found in the nucleus. Its function is as follows. May be involved in control of the cell cycle. The chain is Host cell factor from Drosophila melanogaster (Fruit fly).